The sequence spans 264 residues: Indole-3-glycerol phosphate synthase (264 aa).

The protein belongs to the TrpC family.

It catalyses the reaction 1-(2-carboxyphenylamino)-1-deoxy-D-ribulose 5-phosphate + H(+) = (1S,2R)-1-C-(indol-3-yl)glycerol 3-phosphate + CO2 + H2O. The protein operates within amino-acid biosynthesis; L-tryptophan biosynthesis; L-tryptophan from chorismate: step 4/5. The protein is Indole-3-glycerol phosphate synthase of Xylella fastidiosa (strain M12).